Reading from the N-terminus, the 502-residue chain is Maturase K (502 aa).

This sequence belongs to the intron maturase 2 family. MatK subfamily.

Its subcellular location is the plastid. It is found in the chloroplast. Usually encoded in the trnK tRNA gene intron. Probably assists in splicing its own and other chloroplast group II introns. This is Maturase K from Fremontodendron californicum (California flannelbush).